Here is a 338-residue protein sequence, read N- to C-terminus: Fructose-1,6-bisphosphatase class 1 (338 aa).

Residues E92, D113, L115, and D116 each coordinate Mg(2+). Substrate-binding positions include 116–119 (DGSS), N208, and K274. Mg(2+) is bound at residue E280.

This sequence belongs to the FBPase class 1 family. Homotetramer. Requires Mg(2+) as cofactor.

Its subcellular location is the cytoplasm. The enzyme catalyses beta-D-fructose 1,6-bisphosphate + H2O = beta-D-fructose 6-phosphate + phosphate. The protein operates within carbohydrate biosynthesis; gluconeogenesis. The sequence is that of Fructose-1,6-bisphosphatase class 1 from Paramagnetospirillum magneticum (strain ATCC 700264 / AMB-1) (Magnetospirillum magneticum).